The following is a 197-amino-acid chain: Nucleoside triphosphate pyrophosphatase (197 aa).

The active-site Proton acceptor is the D72.

The protein belongs to the Maf family. It depends on a divalent metal cation as a cofactor.

The protein resides in the cytoplasm. The enzyme catalyses a ribonucleoside 5'-triphosphate + H2O = a ribonucleoside 5'-phosphate + diphosphate + H(+). It carries out the reaction a 2'-deoxyribonucleoside 5'-triphosphate + H2O = a 2'-deoxyribonucleoside 5'-phosphate + diphosphate + H(+). Its function is as follows. Nucleoside triphosphate pyrophosphatase. May have a dual role in cell division arrest and in preventing the incorporation of modified nucleotides into cellular nucleic acids. This is Nucleoside triphosphate pyrophosphatase from Corynebacterium glutamicum (strain ATCC 13032 / DSM 20300 / JCM 1318 / BCRC 11384 / CCUG 27702 / LMG 3730 / NBRC 12168 / NCIMB 10025 / NRRL B-2784 / 534).